Consider the following 426-residue polypeptide: Dihydroorotase (426 aa).

Zn(2+) is bound by residues H58 and H60. Substrate is bound by residues 60-62 (HLR) and N92. Zn(2+) contacts are provided by D150, H177, and H230. N276 is a substrate binding site. D303 is a Zn(2+) binding site. The active site involves D303. H307 is a substrate binding site.

Belongs to the metallo-dependent hydrolases superfamily. DHOase family. Class I DHOase subfamily. Zn(2+) is required as a cofactor.

It catalyses the reaction (S)-dihydroorotate + H2O = N-carbamoyl-L-aspartate + H(+). It functions in the pathway pyrimidine metabolism; UMP biosynthesis via de novo pathway; (S)-dihydroorotate from bicarbonate: step 3/3. Its function is as follows. Catalyzes the reversible cyclization of carbamoyl aspartate to dihydroorotate. This Acetivibrio thermocellus (strain ATCC 27405 / DSM 1237 / JCM 9322 / NBRC 103400 / NCIMB 10682 / NRRL B-4536 / VPI 7372) (Clostridium thermocellum) protein is Dihydroorotase.